The chain runs to 160 residues: Putative 4-hydroxy-4-methyl-2-oxoglutarate aldolase (160 aa).

Substrate-binding positions include 76 to 79 (GGNL) and arginine 98. Residue aspartate 99 participates in a divalent metal cation binding.

The protein belongs to the class II aldolase/RraA-like family. As to quaternary structure, homotrimer. A divalent metal cation serves as cofactor.

The enzyme catalyses 4-hydroxy-4-methyl-2-oxoglutarate = 2 pyruvate. The catalysed reaction is oxaloacetate + H(+) = pyruvate + CO2. Catalyzes the aldol cleavage of 4-hydroxy-4-methyl-2-oxoglutarate (HMG) into 2 molecules of pyruvate. Also contains a secondary oxaloacetate (OAA) decarboxylase activity due to the common pyruvate enolate transition state formed following C-C bond cleavage in the retro-aldol and decarboxylation reactions. This chain is Putative 4-hydroxy-4-methyl-2-oxoglutarate aldolase, found in Deinococcus radiodurans (strain ATCC 13939 / DSM 20539 / JCM 16871 / CCUG 27074 / LMG 4051 / NBRC 15346 / NCIMB 9279 / VKM B-1422 / R1).